Consider the following 392-residue polypeptide: ABSCISIC ACID-INSENSITIVE 5-like protein 4 (392 aa).

The segment at 1–22 (MGTHIDINNLGGDTSRGNESKP) is disordered. Phosphoserine is present on residues Ser28, Ser50, and Ser96. Thr135 is subject to Phosphothreonine. Residues 266–297 (NMGGAGGTVTATSPGTSSAENNTWSSPVPYVF) are disordered. Over residues 274-291 (VTATSPGTSSAENNTWSS) the composition is skewed to polar residues. One can recognise a bZIP domain in the interval 311–374 (VERRQKRMIK…NSELKEFSKQ (64 aa)). The interval 313 to 332 (RRQKRMIKNRESAARSRARK) is basic motif. Residues 339–360 (LEAEIESLKLVNQDLQKKQAEI) are leucine-zipper.

It belongs to the bZIP family. ABI5 subfamily. In terms of assembly, DNA-binding heterodimer. Interacts with ABI3 and the AFP proteins AFP1, AFP2, AFP3 and AFP4. Phosphorylated by CPK4, CPK11, SRK2D and SRK2I in vitro.

The protein localises to the nucleus. Functionally, binds to the ABA-responsive element (ABRE). Could participate in abscisic acid-regulated gene expression. This Arabidopsis thaliana (Mouse-ear cress) protein is ABSCISIC ACID-INSENSITIVE 5-like protein 4 (ABF1).